Consider the following 134-residue polypeptide: ATP synthase epsilon chain (134 aa).

This sequence belongs to the ATPase epsilon chain family. In terms of assembly, F-type ATPases have 2 components, CF(1) - the catalytic core - and CF(0) - the membrane proton channel. CF(1) has five subunits: alpha(3), beta(3), gamma(1), delta(1), epsilon(1). CF(0) has three main subunits: a, b and c.

It is found in the cell membrane. Functionally, produces ATP from ADP in the presence of a proton gradient across the membrane. The polypeptide is ATP synthase epsilon chain (Staphylococcus aureus (strain USA300)).